Consider the following 356-residue polypeptide: MEDLQLVLFVLGAIAIVAVLVHGFWSIRRQQPKSLKDSPMGNFYKKQAEKGESIPKRIDAEGFDADGIGAVRVRKAGELAPNNETPTANPYLKQEVKLETKPQELTSPEFKAELKQGLKPELKVEAKHEPIPAQPDFSLQPPVAKEQHRGPKVSRQEPVLGTQVPQMGQSHAAIVAQKAAEQEQALRAAPQQSALFEENEHQADHQEEAFVEQAAEDELGEPRDVLVLHVVAKDGQQLNGAELLPCFLTLNFKYGDMNIFHRHVDNAGNGKVLFSIANMLKPGVFDPDNMEQFSTQGVVFFMTLPCYGDALMNFSIMLNSARQLAEEIDAVVLDGQRLPWGEFTKQDYLHRIRANA.

Over 1–6 the chain is Periplasmic; that stretch reads MEDLQL. A helical transmembrane segment spans residues 7 to 27; sequence VLFVLGAIAIVAVLVHGFWSI. The Cytoplasmic segment spans residues 28–356; the sequence is RRQQPKSLKD…DYLHRIRANA (329 aa). Residues 132-155 are disordered; it reads PAQPDFSLQPPVAKEQHRGPKVSR.

This sequence belongs to the ZipA family. As to quaternary structure, interacts with FtsZ via their C-terminal domains.

The protein resides in the cell inner membrane. In terms of biological role, essential cell division protein that stabilizes the FtsZ protofilaments by cross-linking them and that serves as a cytoplasmic membrane anchor for the Z ring. Also required for the recruitment to the septal ring of downstream cell division proteins. This chain is Cell division protein ZipA, found in Shewanella baltica (strain OS185).